A 321-amino-acid chain; its full sequence is Olfactory receptor 51V1 (321 aa).

Over 1 to 34 (MFLSSRMITSVSPSTSTNSSFLLTGFSGMEQQYP) the chain is Extracellular. N-linked (GlcNAc...) asparagine glycosylation is present at asparagine 18. Residues 35-55 (WLSIPFSSIYAMVLLGNCMVL) traverse the membrane as a helical segment. Residues 56–63 (HVIWTEPS) are Cytoplasmic-facing. Residues 64-84 (LHQPMFYFLSMLALTDLCMGL) form a helical membrane-spanning segment. The Extracellular portion of the chain corresponds to 85–108 (STVYTVLGILWGIIREISLDSCIA). An intrachain disulfide couples cysteine 106 to cysteine 188. Residues 109 to 129 (QSYFIHGLSFMESSVLLTMAF) traverse the membrane as a helical segment. Residues 130-148 (DRYIAICNPLRYSSILTNS) are Cytoplasmic-facing. The chain crosses the membrane as a helical span at residues 149–169 (RIIKIGLTIIGRSFFFITPPI). The Extracellular portion of the chain corresponds to 170 to 205 (ICLKFFNYCHFHILSHSFCLHQDLLRLACSDIRFNS). The chain crosses the membrane as a helical span at residues 206–226 (YYALMLVICILLLDAILILFS). Residues 227 to 246 (YILILKSVLAVASQEERHKL) are Cytoplasmic-facing. Residues 247–267 (FQTCISHICAVLVFYIPIISL) traverse the membrane as a helical segment. Residues 268–282 (TMVHRFGKHLSPVAH) lie on the Extracellular side of the membrane. A helical transmembrane segment spans residues 283 to 303 (VLIGNIYILFPPLMNPIIYSV). Residues 304 to 321 (KTQQIHTRMLRLFSLKRY) lie on the Cytoplasmic side of the membrane.

Belongs to the G-protein coupled receptor 1 family.

It is found in the cell membrane. In terms of biological role, odorant receptor. In Homo sapiens (Human), this protein is Olfactory receptor 51V1 (OR51V1).